Here is a 160-residue protein sequence, read N- to C-terminus: MASEPGGLVEIWTDGGCKPNPGAGGWAAVLRFGAAEREMSGAERETTNNRMELTAAAAALEALKRPCRVKLHTDSEYLRNGITRWHTGWVRRNWRNAQGDPVANYELWQRVLAAAKPHEIEWIWVRGHAGDPMNERVDQLATAAREAMLREPAETSTARR.

The RNase H type-1 domain maps to 5-146 (PGGLVEIWTD…VDQLATAARE (142 aa)). 4 residues coordinate Mg(2+): aspartate 14, glutamate 52, aspartate 74, and aspartate 138.

The protein belongs to the RNase H family. Monomer. Mg(2+) serves as cofactor.

It is found in the cytoplasm. The enzyme catalyses Endonucleolytic cleavage to 5'-phosphomonoester.. In terms of biological role, endonuclease that specifically degrades the RNA of RNA-DNA hybrids. This is Ribonuclease H from Acidiphilium cryptum (strain JF-5).